The sequence spans 181 residues: NAD(P)H-quinone oxidoreductase subunit I, chloroplastic (181 aa).

4Fe-4S ferredoxin-type domains follow at residues 52–81 (GRIH…VDWE) and 92–121 (KSYS…MTEE). [4Fe-4S] cluster is bound by residues Cys61, Cys64, Cys67, Cys71, Cys101, Cys104, Cys107, and Cys111.

Belongs to the complex I 23 kDa subunit family. In terms of assembly, NDH is composed of at least 16 different subunits, 5 of which are encoded in the nucleus. [4Fe-4S] cluster is required as a cofactor.

The protein resides in the plastid. It localises to the chloroplast thylakoid membrane. It carries out the reaction a plastoquinone + NADH + (n+1) H(+)(in) = a plastoquinol + NAD(+) + n H(+)(out). It catalyses the reaction a plastoquinone + NADPH + (n+1) H(+)(in) = a plastoquinol + NADP(+) + n H(+)(out). NDH shuttles electrons from NAD(P)H:plastoquinone, via FMN and iron-sulfur (Fe-S) centers, to quinones in the photosynthetic chain and possibly in a chloroplast respiratory chain. The immediate electron acceptor for the enzyme in this species is believed to be plastoquinone. Couples the redox reaction to proton translocation, and thus conserves the redox energy in a proton gradient. The polypeptide is NAD(P)H-quinone oxidoreductase subunit I, chloroplastic (Staurastrum punctulatum (Green alga)).